Consider the following 830-residue polypeptide: Cadherin-16 (830 aa).

The N-terminal stretch at 1-21 (MISARPWLLYLSVIQAFTTEA) is a signal peptide. At 22-788 (QPAESLHTEV…MKGMPTKLSA (767 aa)) the chain is on the extracellular side. Cadherin domains are found at residues 27–128 (LHTE…VPQF), 133–237 (YRAQ…SIVE), 244–338 (EPVH…APVC), 343–451 (PTVN…APEF), 457–566 (GPVT…PLKL), and 571–667 (YETS…VPAL). N-linked (GlcNAc...) asparagine glycans are attached at residues N519, N604, and N724. The segment at 668-788 (TLSAGPSRHL…MKGMPTKLSA (121 aa)) is ectodomain G. Residues 789 to 809 (VGVLLGTLAAIGFILILVFTH) form a helical membrane-spanning segment. The Cytoplasmic portion of the chain corresponds to 810 to 830 (LALARKDLDQPADSVPLKAAV). S823 carries the post-translational modification Phosphoserine.

Kidney specific.

The protein localises to the cell membrane. Cadherins are calcium-dependent cell adhesion proteins. They preferentially interact with themselves in a homophilic manner in connecting cells; cadherins may thus contribute to the sorting of heterogeneous cell types. The protein is Cadherin-16 (Cdh16) of Mus musculus (Mouse).